A 337-amino-acid polypeptide reads, in one-letter code: Manganese-dependent ADP-ribose/CDP-alcohol diphosphatase (337 aa).

The residue at position 1 (M1) is an N-acetylmethionine. Positions 25, 27, 74, 110, 241, 278, and 280 each coordinate Zn(2+).

The protein belongs to the ADPRibase-Mn family. As to quaternary structure, monomer. Mg(2+) serves as cofactor.

The enzyme catalyses CDP-choline + H2O = phosphocholine + CMP + 2 H(+). The catalysed reaction is ADP-D-ribose + H2O = D-ribose 5-phosphate + AMP + 2 H(+). It catalyses the reaction CDP-glycerol + H2O = sn-glycerol 3-phosphate + CMP + 2 H(+). Hydrolyzes ADP-ribose, IDP-ribose, CDP-glycerol, CDP-choline and CDP-ethanolamine, but not other non-reducing ADP-sugars or CDP-glucose. May be involved in immune cell signaling as suggested by the second-messenger role of ADP-ribose, which activates TRPM2 as a mediator of oxidative/nitrosative stress. The sequence is that of Manganese-dependent ADP-ribose/CDP-alcohol diphosphatase (ADPRM) from Bos taurus (Bovine).